The sequence spans 397 residues: MKPISIVAFPIPAISMLLLSAVSQAASMQPPIAKPGETWILQAKRSDEFNVKDATKWNFQTENYGVWSWKNENATVSNGKLKLTTKRESHQRTFWDGCNQQQVANYPLYYTSGVAKSRATGNYGYYEARIKGASTFPGVSPAFWMYSTIDRSLTKEGDVQYSEIDVVELTQKSAVRESDHDLHNIVVKNGKPTWMRPGSFPQTNHNGYHLPFDPRNDFHTYGVNVTKDKITWYVDGEIVGEKDNLYWHRQMNLTLSQGLRAPHTQWKCNQFYPSANKSAEGFPTSMEVDYVRTWVKVGNNNSAPGEGQSCPNTFVAVNSVQLSAAKQTLRKGQSTTLESTVLPNCATNKKVIYSSSNKNVATVNSAGVVKAKNKGTATITVKTKNKGKIDKLTIAVN.

The first 25 residues, 1-25 (MKPISIVAFPIPAISMLLLSAVSQA), serve as a signal peptide directing secretion. The 274-residue stretch at 26–299 (ASMQPPIAKP…YVRTWVKVGN (274 aa)) folds into the GH16 domain. Cys-98 and Cys-268 form a disulfide bridge. The active-site Nucleophile is the Glu-163. Asp-165 is a catalytic residue. Glu-168 (proton donor) is an active-site residue. Residues 316–387 (AVNSVQLSAA…TITVKTKNKG (72 aa)) form the BIG2 domain.

It belongs to the glycosyl hydrolase 16 family.

It is found in the periplasm. The enzyme catalyses Endohydrolysis of (1-&gt;4)-beta-D-linkages between D-galactose 4-sulfate and 3,6-anhydro-D-galactose in kappa-carrageenans.. The chain is Kappa-carrageenase (cgkA) from Pseudoalteromonas carrageenovora (Alteromonas carrageenovora).